The sequence spans 31 residues: Cytochrome b6-f complex subunit 6 (31 aa).

Residues 4–24 (VIAYLGLLASVLIGTIVIYLG) traverse the membrane as a helical segment.

This sequence belongs to the PetL family. In terms of assembly, the 4 large subunits of the cytochrome b6-f complex are cytochrome b6, subunit IV (17 kDa polypeptide, PetD), cytochrome f and the Rieske protein, while the 4 small subunits are PetG, PetL, PetM and PetN. The complex functions as a dimer.

It is found in the plastid. The protein resides in the chloroplast thylakoid membrane. In terms of biological role, component of the cytochrome b6-f complex, which mediates electron transfer between photosystem II (PSII) and photosystem I (PSI), cyclic electron flow around PSI, and state transitions. PetL is important for photoautotrophic growth as well as for electron transfer efficiency and stability of the cytochrome b6-f complex. The chain is Cytochrome b6-f complex subunit 6 from Oltmannsiellopsis viridis (Marine flagellate).